A 564-amino-acid polypeptide reads, in one-letter code: Type 2 DNA topoisomerase 6 subunit B (564 aa).

ATP contacts are provided by residues N46, D78, 99–100 (TK), 109–116 (GQQGIGIS), and K471.

The protein belongs to the TOP6B family. As to quaternary structure, homodimer. Heterotetramer of two Top6A and two Top6B chains.

The catalysed reaction is ATP-dependent breakage, passage and rejoining of double-stranded DNA.. Functionally, relaxes both positive and negative superturns and exhibits a strong decatenase activity. This chain is Type 2 DNA topoisomerase 6 subunit B, found in Pyrococcus horikoshii (strain ATCC 700860 / DSM 12428 / JCM 9974 / NBRC 100139 / OT-3).